We begin with the raw amino-acid sequence, 345 residues long: Holliday junction branch migration complex subunit RuvB (345 aa).

The large ATPase domain (RuvB-L) stretch occupies residues 1–182 (MDQRIIASSS…FGIVQRLEFY (182 aa)). ATP is bound by residues Ile-21, Arg-22, Gly-63, Lys-66, Thr-67, Thr-68, 129–131 (EDF), Arg-172, Tyr-182, and Arg-219. Mg(2+) is bound at residue Thr-67. Residues 183–253 (SPQELTRIVI…VAQAAMQMLK (71 aa)) form a small ATPAse domain (RuvB-S) region. Positions 256 to 345 (PEGFDELDRR…PGIGEPGDLF (90 aa)) are head domain (RuvB-H). DNA contacts are provided by Arg-292, Arg-311, and Arg-316.

It belongs to the RuvB family. Homohexamer. Forms an RuvA(8)-RuvB(12)-Holliday junction (HJ) complex. HJ DNA is sandwiched between 2 RuvA tetramers; dsDNA enters through RuvA and exits via RuvB. An RuvB hexamer assembles on each DNA strand where it exits the tetramer. Each RuvB hexamer is contacted by two RuvA subunits (via domain III) on 2 adjacent RuvB subunits; this complex drives branch migration. In the full resolvosome a probable DNA-RuvA(4)-RuvB(12)-RuvC(2) complex forms which resolves the HJ.

Its subcellular location is the cytoplasm. The catalysed reaction is ATP + H2O = ADP + phosphate + H(+). In terms of biological role, the RuvA-RuvB-RuvC complex processes Holliday junction (HJ) DNA during genetic recombination and DNA repair, while the RuvA-RuvB complex plays an important role in the rescue of blocked DNA replication forks via replication fork reversal (RFR). RuvA specifically binds to HJ cruciform DNA, conferring on it an open structure. The RuvB hexamer acts as an ATP-dependent pump, pulling dsDNA into and through the RuvAB complex. RuvB forms 2 homohexamers on either side of HJ DNA bound by 1 or 2 RuvA tetramers; 4 subunits per hexamer contact DNA at a time. Coordinated motions by a converter formed by DNA-disengaged RuvB subunits stimulates ATP hydrolysis and nucleotide exchange. Immobilization of the converter enables RuvB to convert the ATP-contained energy into a lever motion, pulling 2 nucleotides of DNA out of the RuvA tetramer per ATP hydrolyzed, thus driving DNA branch migration. The RuvB motors rotate together with the DNA substrate, which together with the progressing nucleotide cycle form the mechanistic basis for DNA recombination by continuous HJ branch migration. Branch migration allows RuvC to scan DNA until it finds its consensus sequence, where it cleaves and resolves cruciform DNA. The chain is Holliday junction branch migration complex subunit RuvB from Xanthomonas oryzae pv. oryzae (strain MAFF 311018).